The chain runs to 339 residues: Methylthioribose-1-phosphate isomerase (339 aa).

Residues 52-54 (RGA), arginine 89, and glutamine 188 each bind substrate. The Proton donor role is filled by aspartate 229. 239–240 (NK) serves as a coordination point for substrate.

The protein belongs to the eIF-2B alpha/beta/delta subunits family. MtnA subfamily.

It catalyses the reaction 5-(methylsulfanyl)-alpha-D-ribose 1-phosphate = 5-(methylsulfanyl)-D-ribulose 1-phosphate. It functions in the pathway amino-acid biosynthesis; L-methionine biosynthesis via salvage pathway; L-methionine from S-methyl-5-thio-alpha-D-ribose 1-phosphate: step 1/6. Functionally, catalyzes the interconversion of methylthioribose-1-phosphate (MTR-1-P) into methylthioribulose-1-phosphate (MTRu-1-P). This chain is Methylthioribose-1-phosphate isomerase, found in Anaeromyxobacter sp. (strain K).